The primary structure comprises 464 residues: MKMWSGRFSQSLDPEFESWQRSLPFDKKLLRHEVAASGAHATALAKAGVLSSEELALIKSGLAQIARDGAPDADDPSIEDVHHFVESRLIEIAGEVGRKLHTGRSRNEQIATDLRLYVREQIDETTLLIADVIAALIERAESVGEAAMPSYTHLQRAEPVLIAHWLLAYAEMFFRDITRLADCRKRANLCPLGSAAVAGTFVALDRGYIATLLGFDAPTANSIDATSDRDFAIEFVQSLSVIGLHLSRMAEEMILFATTEFGFLQLPEQFATGSSAMPQKKNPDSLELVRGKSAALLAHAMQLAVTLKALPLAYNKDMQETQQPVFASAEECIAMLRITAGFLRAVKFNTAVMHTAASTGYMNAMAAAGYLVQQGIPFRRAHELIGAAVKLAVEKHCELHDLSADDLRNLGIAADDSFYAALQLPAVLAQKNVAGGTAPNQVSTALKAAKKKLIAIGEVQHVSA.

Belongs to the lyase 1 family. Argininosuccinate lyase subfamily.

Its subcellular location is the cytoplasm. It carries out the reaction 2-(N(omega)-L-arginino)succinate = fumarate + L-arginine. The protein operates within amino-acid biosynthesis; L-arginine biosynthesis; L-arginine from L-ornithine and carbamoyl phosphate: step 3/3. The chain is Argininosuccinate lyase from Koribacter versatilis (strain Ellin345).